A 52-amino-acid chain; its full sequence is Large ribosomal subunit protein eL39 (52 aa).

It belongs to the eukaryotic ribosomal protein eL39 family. In terms of assembly, interacts with YIH1.

The protein is Large ribosomal subunit protein eL39 (RPL39) of Encephalitozoon cuniculi (strain GB-M1) (Microsporidian parasite).